We begin with the raw amino-acid sequence, 307 residues long: Type 2A encapsulin shell protein (307 aa).

This sequence belongs to the encapsulin family. Family 2A subfamily. In terms of assembly, homooligomeric. The encapsulin nanocompartment is formed by 60 subunits; monomers form pentamers which assemble to form shells. There are 12 charged pores where the pentamers meet as well as 3-fold axis channels and dimer channels. Post-translationally, the N-terminus is blocked.

The protein resides in the encapsulin nanocompartment. The protein localises to the cytoplasm. Its subcellular location is the cytosol. It localises to the cell membrane. Shell component of a type 2A encapsulin nanocompartment. Forms encapsulin nanocompartments about 24 nm in diameter from 60 monomers. Probably encapsulates at least cysteine desulfurase (CyD, AC O32975) and allows passage of cysteine into its interior, probably involved in sulfur metabolism. Expression in M.smegmatis generates a multimeric protein, whereas expression in E.coli does not. This is Type 2A encapsulin shell protein from Mycobacterium leprae (strain TN).